A 197-amino-acid polypeptide reads, in one-letter code: Mediator of RNA polymerase II transcription subunit 21 (197 aa).

A disordered region spans residues 37 to 112; that stretch reads PPPSVPSAVP…APPRPDSPNT (76 aa). Low complexity-rich tracts occupy residues 60-70 and 90-100; these read PTSGTATNTPG and PQMQQQHQEQP. Residues 140–183 adopt a coiled-coil conformation; that stretch reads GIKSSEAEQQERIKQLAEELRVVEEERSARRRELRRLGEKVDGL.

It belongs to the Mediator complex subunit 21 family. In terms of assembly, component of the Mediator complex.

The protein resides in the nucleus. Component of the Mediator complex, a coactivator involved in the regulated transcription of nearly all RNA polymerase II-dependent genes. Mediator functions as a bridge to convey information from gene-specific regulatory proteins to the basal RNA polymerase II transcription machinery. Mediator is recruited to promoters by direct interactions with regulatory proteins and serves as a scaffold for the assembly of a functional preinitiation complex with RNA polymerase II and the general transcription factors. In Coccidioides immitis (strain RS) (Valley fever fungus), this protein is Mediator of RNA polymerase II transcription subunit 21 (SRB7).